A 156-amino-acid chain; its full sequence is Ribosomal RNA large subunit methyltransferase H (156 aa).

S-adenosyl-L-methionine is bound by residues L73, G104, and 123 to 128 (VSSLTL).

The protein belongs to the RNA methyltransferase RlmH family. Homodimer.

It localises to the cytoplasm. It catalyses the reaction pseudouridine(1915) in 23S rRNA + S-adenosyl-L-methionine = N(3)-methylpseudouridine(1915) in 23S rRNA + S-adenosyl-L-homocysteine + H(+). Its function is as follows. Specifically methylates the pseudouridine at position 1915 (m3Psi1915) in 23S rRNA. The polypeptide is Ribosomal RNA large subunit methyltransferase H (Paraburkholderia phymatum (strain DSM 17167 / CIP 108236 / LMG 21445 / STM815) (Burkholderia phymatum)).